The sequence spans 156 residues: Large ribosomal subunit protein uL22 (156 aa).

It belongs to the universal ribosomal protein uL22 family. As to quaternary structure, part of the 50S ribosomal subunit.

In terms of biological role, this protein binds specifically to 23S rRNA. It makes multiple contacts with different domains of the 23S rRNA in the assembled 50S subunit and ribosome. Its function is as follows. The globular domain of the protein is located near the polypeptide exit tunnel on the outside of the subunit, while an extended beta-hairpin is found that lines the wall of the exit tunnel in the center of the 70S ribosome. This is Large ribosomal subunit protein uL22 from Halobacterium salinarum (strain ATCC 700922 / JCM 11081 / NRC-1) (Halobacterium halobium).